Consider the following 1014-residue polypeptide: DNA translocase FtsK 2 (1014 aa).

Residues 1–21 (MFWIVLIVILLLALAGLFFVR) traverse the membrane as a helical segment. Disordered regions lie at residues 89 to 142 (ESEP…EDIA), 283 to 318 (RHAG…RRRV), and 487 to 525 (SQAV…AVSE). Residues 121 to 140 (EEAETEEAEAAEEEAADTED) are compositionally biased toward acidic residues. The span at 298-307 (DVSQGQSVSD) shows a compositional bias: polar residues. The region spanning 662–871 (GQPVVTDLGK…FQVSSKIDSR (210 aa)) is the FtsK domain. ATP is bound at residue 682–687 (GSGKSV).

It belongs to the FtsK/SpoIIIE/SftA family. Homohexamer. Forms a ring that surrounds DNA.

It is found in the cell inner membrane. Functionally, essential cell division protein that coordinates cell division and chromosome segregation. The N-terminus is involved in assembly of the cell-division machinery. The C-terminus functions as a DNA motor that moves dsDNA in an ATP-dependent manner towards the dif recombination site, which is located within the replication terminus region. Translocation stops specifically at Xer-dif sites, where FtsK interacts with the Xer recombinase, allowing activation of chromosome unlinking by recombination. FtsK orienting polar sequences (KOPS) guide the direction of DNA translocation. FtsK can remove proteins from DNA as it translocates, but translocation stops specifically at XerCD-dif site, thereby preventing removal of XerC and XerD from dif. In Neisseria meningitidis serogroup A / serotype 4A (strain DSM 15465 / Z2491), this protein is DNA translocase FtsK 2 (ftsK2).